The primary structure comprises 255 residues: ATP synthase subunit a (255 aa).

6 consecutive transmembrane segments (helical) span residues 40-60, 109-129, 135-155, 163-183, 196-218, and 230-250; these read TEPI…ASEV, LIGG…IPGV, NLNI…YYGL, VAHL…IEVI, LMLN…ALFV, and IVVQ…LATE.

Belongs to the ATPase A chain family. F-type ATPases have 2 components, CF(1) - the catalytic core - and CF(0) - the membrane proton channel. CF(1) has five subunits: alpha(3), beta(3), gamma(1), delta(1), epsilon(1). CF(0) has three main subunits: a(1), b(2) and c(9-12). The alpha and beta chains form an alternating ring which encloses part of the gamma chain. CF(1) is attached to CF(0) by a central stalk formed by the gamma and epsilon chains, while a peripheral stalk is formed by the delta and b chains.

It localises to the cell inner membrane. Functionally, key component of the proton channel; it plays a direct role in the translocation of protons across the membrane. This Sorangium cellulosum (strain So ce56) (Polyangium cellulosum (strain So ce56)) protein is ATP synthase subunit a.